The following is a 242-amino-acid chain: Type III pantothenate kinase (242 aa).

7–14 contributes to the ATP binding site; the sequence is DLGNSRFK. Substrate is bound by residues Tyr91 and 98 to 101; that span reads GVDR. The Proton acceptor role is filled by Asp100. Thr121 contacts ATP. Substrate is bound at residue Thr171.

It belongs to the type III pantothenate kinase family. In terms of assembly, homodimer. NH4(+) is required as a cofactor. It depends on K(+) as a cofactor.

It localises to the cytoplasm. The catalysed reaction is (R)-pantothenate + ATP = (R)-4'-phosphopantothenate + ADP + H(+). It participates in cofactor biosynthesis; coenzyme A biosynthesis; CoA from (R)-pantothenate: step 1/5. In terms of biological role, catalyzes the phosphorylation of pantothenate (Pan), the first step in CoA biosynthesis. This chain is Type III pantothenate kinase, found in Xanthomonas campestris pv. campestris (strain 8004).